The following is a 1025-amino-acid chain: Multidrug resistance protein MdtC (1025 aa).

12 helical membrane passes run 3–23 (FFAL…AITL), 333–353 (EVEQ…FLFL), 360–380 (IIPA…MYLC), 387–407 (LSLM…IVVL), 431–451 (VGFT…PLLL), 463–483 (FAVT…TLTP), 528–548 (LVGV…ISIP), 853–873 (VILI…LYES), 875–895 (VHPL…LLAL), 897–917 (LFNA…IGIV), 953–973 (PIMM…LSGG), and 984–1004 (ITIV…TPVV).

This sequence belongs to the resistance-nodulation-cell division (RND) (TC 2.A.6) family. MdtC subfamily. Part of a tripartite efflux system composed of MdtA, MdtB and MdtC. MdtC forms a heteromultimer with MdtB.

It is found in the cell inner membrane. Its function is as follows. The MdtABC tripartite complex confers resistance against novobiocin and deoxycholate. The chain is Multidrug resistance protein MdtC from Escherichia coli (strain SMS-3-5 / SECEC).